Consider the following 1185-residue polypeptide: 1-phosphatidylinositol 4,5-bisphosphate phosphodiesterase beta-2 (1185 aa).

In terms of domain architecture, PI-PLC X-box spans 312–463 (HDMTQPLNHY…LRGKILIKNK (152 aa)). Residue histidine 327 is part of the active site. Residues asparagine 328, glutamate 357, and aspartate 359 each coordinate Ca(2+). Histidine 374 is a catalytic residue. Residue glutamate 408 coordinates Ca(2+). The segment at 460–533 (IKNKKNQFSG…EEIKKMQSDE (74 aa)) is disordered. Residues 465-476 (NQFSGPTSSSKD) show a composition bias toward polar residues. Acidic residues predominate over residues 501-524 (EGTELEEEEVEEEEEEESGNLDEE). The PI-PLC Y-box domain maps to 546–662 (MSSLVNYIQP…GYLLKHEFMR (117 aa)). Positions 662-790 (RRPDKQFNPF…CLHSESNMPL (129 aa)) constitute a C2 domain. Disordered regions lie at residues 859-888 (LAPT…RTAS) and 943-979 (GACK…VDGR). Positions 872 to 888 (GAREEAMKEAAEPRTAS) are enriched in basic and acidic residues. Serine 953 is modified (phosphoserine). Residues 988–1147 (ELELLRQGEE…VKESVRACLR (160 aa)) are a coiled coil.

Interacts with RAC1. Forms a complex composed of at least WDR26, a G-beta:gamma unit, and PLCB2. It depends on Ca(2+) as a cofactor.

It carries out the reaction a 1,2-diacyl-sn-glycero-3-phospho-(1D-myo-inositol-4,5-bisphosphate) + H2O = 1D-myo-inositol 1,4,5-trisphosphate + a 1,2-diacyl-sn-glycerol + H(+). The catalysed reaction is a 1,2-diacyl-sn-glycero-3-phospho-(1D-myo-inositol) + H2O = 1D-myo-inositol 1-phosphate + a 1,2-diacyl-sn-glycerol + H(+). In terms of biological role, the production of the second messenger molecules diacylglycerol (DAG) and inositol 1,4,5-trisphosphate (IP3) is mediated by activated phosphatidylinositol-specific phospholipase C enzymes. In neutrophils, participates in a phospholipase C-activating N-formyl peptide-activated GPCR (G protein-coupled receptor) signaling pathway by promoting RASGRP4 activation by DAG, to promote neutrophil functional responses. In Homo sapiens (Human), this protein is 1-phosphatidylinositol 4,5-bisphosphate phosphodiesterase beta-2.